The chain runs to 291 residues: Undecaprenyl-diphosphatase 2 (291 aa).

6 helical membrane passes run 39–59 (PGAAFTAITQIGTEAAVLIYF), 85–105 (AQMGWLVIVGSIPIGVLGVTL), 118–138 (ITATMLIVMGVILGIADRLAA), 203–223 (FLLAIPAVLASGVFELKDAAA), 231–251 (PTVFATVIAFVSGYAVIAWFM), and 262–282 (FVWYRIALGIAIIALVATGAL).

The protein belongs to the UppP family.

It is found in the cell membrane. The catalysed reaction is di-trans,octa-cis-undecaprenyl diphosphate + H2O = di-trans,octa-cis-undecaprenyl phosphate + phosphate + H(+). Catalyzes the dephosphorylation of undecaprenyl diphosphate (UPP). Confers resistance to bacitracin. In Streptomyces avermitilis (strain ATCC 31267 / DSM 46492 / JCM 5070 / NBRC 14893 / NCIMB 12804 / NRRL 8165 / MA-4680), this protein is Undecaprenyl-diphosphatase 2.